A 283-amino-acid chain; its full sequence is ATP phosphoribosyltransferase (283 aa).

It belongs to the ATP phosphoribosyltransferase family. Long subfamily. The cofactor is Mg(2+).

It localises to the cytoplasm. The catalysed reaction is 1-(5-phospho-beta-D-ribosyl)-ATP + diphosphate = 5-phospho-alpha-D-ribose 1-diphosphate + ATP. It functions in the pathway amino-acid biosynthesis; L-histidine biosynthesis; L-histidine from 5-phospho-alpha-D-ribose 1-diphosphate: step 1/9. Feedback inhibited by histidine. In terms of biological role, catalyzes the condensation of ATP and 5-phosphoribose 1-diphosphate to form N'-(5'-phosphoribosyl)-ATP (PR-ATP). Has a crucial role in the pathway because the rate of histidine biosynthesis seems to be controlled primarily by regulation of HisG enzymatic activity. The chain is ATP phosphoribosyltransferase from Azobacteroides pseudotrichonymphae genomovar. CFP2.